Consider the following 296-residue polypeptide: Acetylglutamate kinase (296 aa).

Residues 66–67 (GG), R88, and N191 each bind substrate.

This sequence belongs to the acetylglutamate kinase family. ArgB subfamily.

The protein resides in the cytoplasm. It carries out the reaction N-acetyl-L-glutamate + ATP = N-acetyl-L-glutamyl 5-phosphate + ADP. The protein operates within amino-acid biosynthesis; L-arginine biosynthesis; N(2)-acetyl-L-ornithine from L-glutamate: step 2/4. Functionally, catalyzes the ATP-dependent phosphorylation of N-acetyl-L-glutamate. This is Acetylglutamate kinase from Lawsonia intracellularis (strain PHE/MN1-00).